We begin with the raw amino-acid sequence, 765 residues long: Putative U-box domain-containing protein 50 (765 aa).

Residues 198 to 391 (QEIENYFQQL…NRRIEFCKER (194 aa)) are a coiled coil. Positions 422-765 (SDRLRLKSGG…HSKRAAQASS (344 aa)) constitute a Protein kinase domain. Residues 428-436 (KSGGNWTNV) and Lys-449 contribute to the ATP site. The U-box domain maps to 688 to 762 (DIPSVFMCPI…QDWHSKRAAQ (75 aa)).

Belongs to the protein kinase superfamily. Ser/Thr protein kinase family.

It carries out the reaction S-ubiquitinyl-[E2 ubiquitin-conjugating enzyme]-L-cysteine + [acceptor protein]-L-lysine = [E2 ubiquitin-conjugating enzyme]-L-cysteine + N(6)-ubiquitinyl-[acceptor protein]-L-lysine.. The protein operates within protein modification; protein ubiquitination. Its function is as follows. Functions as an E3 ubiquitin ligase. The sequence is that of Putative U-box domain-containing protein 50 (PUB50) from Arabidopsis thaliana (Mouse-ear cress).